The primary structure comprises 330 residues: Replication factor C small subunit (330 aa).

Position 48–55 (Gly-48–Thr-55) interacts with ATP.

It belongs to the activator 1 small subunits family. RfcS subfamily. As to quaternary structure, heteropentamer composed of four small subunits (RfcS) and one large subunit (RfcL). A homotetramer of this subunit interacts with PCNA heterodimer PCNA1-PCNA2.

Its function is as follows. Part of the RFC clamp loader complex which loads the PCNA sliding clamp onto DNA. The complex possesses DNA-dependent ATPase activity. The chain is Replication factor C small subunit (rfcS) from Saccharolobus solfataricus (strain ATCC 35092 / DSM 1617 / JCM 11322 / P2) (Sulfolobus solfataricus).